Here is a 206-residue protein sequence, read N- to C-terminus: Endoplasmic reticulum transmembrane protein 1 (206 aa).

The Lumenal segment spans residues 1–7; sequence MSLYFTT. A helical membrane pass occupies residues 8-28; it reads LFLLLTVEMVMLFIFVLPLPF. Residues 29 to 45 lie on the Cytoplasmic side of the membrane; that stretch reads RIRRGIFSTYNQLTAKQ. A helical membrane pass occupies residues 46 to 66; it reads QIKTIIFITGCLVGLLFIDSW. The Lumenal portion of the chain corresponds to 67-104; the sequence is KRSQIRVSLYHNDNSGSIGSSAVTPIQALASRAYNQRN. A helical transmembrane segment spans residues 105–125; sequence MYISGFILYFSICIPTVMSIV. Residues 126 to 206 lie on the Cytoplasmic side of the membrane; it reads KRLVKYQGLI…AAAEASKKGN (81 aa). The interval 140–163 is disordered; it reads KQKLNKPSSNSKKDSNEADSTKLQ. Basic and acidic residues predominate over residues 150-163; sequence SKKDSNEADSTKLQ. Lys190 participates in a covalent cross-link: Glycyl lysine isopeptide (Lys-Gly) (interchain with G-Cter in ubiquitin). Positions 203 to 206 match the Di-lysine motif motif; the sequence is KKGN.

It belongs to the BCAP29/BCAP31 family.

It is found in the endoplasmic reticulum membrane. Functionally, may play a role in anterograde transport of membrane proteins from the endoplasmic reticulum to the Golgi. The chain is Endoplasmic reticulum transmembrane protein 1 (YET1) from Saccharomyces cerevisiae (strain ATCC 204508 / S288c) (Baker's yeast).